The primary structure comprises 302 residues: Acetylglutamate kinase (302 aa).

Substrate is bound by residues 68 to 69, Arg-90, and Asn-195; that span reads GG.

This sequence belongs to the acetylglutamate kinase family. ArgB subfamily.

It is found in the cytoplasm. It catalyses the reaction N-acetyl-L-glutamate + ATP = N-acetyl-L-glutamyl 5-phosphate + ADP. It participates in amino-acid biosynthesis; L-arginine biosynthesis; N(2)-acetyl-L-ornithine from L-glutamate: step 2/4. Catalyzes the ATP-dependent phosphorylation of N-acetyl-L-glutamate. This is Acetylglutamate kinase from Marinomonas sp. (strain MWYL1).